Consider the following 485-residue polypeptide: Serine/threonine-protein kinase 4 (485 aa).

The Protein kinase domain occupies 30–281; sequence FDVLEKLGEG…ATELLQHPFI (252 aa). ATP contacts are provided by residues 36 to 44 and Lys-59; that span reads LGEGSYGSV. Asp-149 functions as the Proton acceptor in the catalytic mechanism. Thr-183 carries the post-translational modification Phosphothreonine; by autocatalysis. An SARAH domain is found at 431-478; sequence YSFLKDWSVAEVQLKLNSLDPMMEREIEEIHHKYQAKRQPILEAIESK.

The protein belongs to the protein kinase superfamily. STE Ser/Thr protein kinase family. STE20 subfamily. In terms of assembly, homodimer; mediated via the coiled-coil region. Mg(2+) serves as cofactor. Post-translationally, autophosphorylated on Thr-183. Proteolytically cleaved by caspase-3 during apoptosis at Asp-326 resulting in a 37 kDa form. Proteolytic cleavage results in kinase activation and nuclear translocation of the truncated form (MST1/N).

Its subcellular location is the cytoplasm. It is found in the nucleus. The enzyme catalyses L-seryl-[protein] + ATP = O-phospho-L-seryl-[protein] + ADP + H(+). The catalysed reaction is L-threonyl-[protein] + ATP = O-phospho-L-threonyl-[protein] + ADP + H(+). Its activity is regulated as follows. The C-terminal non-catalytic region inhibits the kinase activity, the enzyme is activated by caspase-cleavage. Homodimerization and autophosphorylation of Thr-183 is also required for full activation. In terms of biological role, stress-activated, pro-apoptotic kinase which, following caspase-cleavage, enters the nucleus and induces chromatin condensation followed by internucleosomal DNA fragmentation. Key component of the Hippo signaling pathway which plays a pivotal role in organ size control and tumor suppression by restricting proliferation and promoting apoptosis. The core of this pathway is composed of a kinase cascade wherein stk3/mst2 and stk4/mst1, in complex with its regulatory protein sav1, phosphorylates and activates lats1/2 in complex with its regulatory protein mob1, which in turn phosphorylates and inactivates yap1 oncoprotein and wwtr1/taz. Phosphorylation of yap1 by lats2 inhibits its translocation into the nucleus to regulate cellular genes important for cell proliferation, cell death, and cell migration. Phosphorylates 'Ser-14' of histone H2B (H2BS14ph) during apoptosis. This is Serine/threonine-protein kinase 4 (stk4) from Xenopus laevis (African clawed frog).